The sequence spans 256 residues: Thrombin-like enzyme cerastocytin (256 aa).

An N-terminal signal peptide occupies residues 1–18 (MVLISVLASLLVLQLSYA). Residues 19–24 (QKSSEL) constitute a propeptide that is removed on maturation. The 223-residue stretch at 25 to 247 (VIGGAECNIN…YTDWIRNIIA (223 aa)) folds into the Peptidase S1 domain. Intrachain disulfides connect C31–C161, C98–C254, C140–C208, C172–C187, and C198–C223. N-linked (GlcNAc...) asparagine glycosylation occurs at N44. Residues H65 and D108 each act as charge relay system in the active site. 3 N-linked (GlcNAc...) asparagine glycosylation sites follow: N119, N120, and N152. S202 serves as the catalytic Charge relay system.

The protein belongs to the peptidase S1 family. Snake venom subfamily. Monomer. As to expression, expressed by the venom gland.

It localises to the secreted. Its activity is regulated as follows. Its platelets aggregating activity is inhibited by chlorpromazine, theophylline mepacrine. Its platelet aggregating activity and its amidolytic activity are inhibited by PMSF, TPCK, TLCK and soybean trypsin inhibitors. Is unaffected by hirudin or by antithrombin-III in the presence of heparin. Functionally, thrombin-like snake venom serine protease which potently induces platelet aggregation and has fibrinogenolytic activities. Clots purified fibrinogen and hydrolyzes alpha-chains (FGA). High concentrations of this enzyme also cleave prothrombin (F2) and factor X (F10). Is also able to activate factor XIII (F8). This chain is Thrombin-like enzyme cerastocytin, found in Cerastes cerastes (Horned desert viper).